Here is a 436-residue protein sequence, read N- to C-terminus: GTPase Der (436 aa).

2 consecutive EngA-type G domains span residues 3–167 (NIVA…PIKP) and 177–352 (PRFA…ENRQ). Residues 9-16 (GRPNVGKS), 56-60 (DTGGY), 119-122 (NKVD), 183-190 (GRPNAGKS), 230-234 (DTAGI), and 295-298 (NKWD) each bind GTP. Residues 353–436 (QRISTSKFNE…VPIDIYIREK (84 aa)) form the KH-like domain.

The protein belongs to the TRAFAC class TrmE-Era-EngA-EngB-Septin-like GTPase superfamily. EngA (Der) GTPase family. In terms of assembly, associates with the 50S ribosomal subunit.

In terms of biological role, GTPase that plays an essential role in the late steps of ribosome biogenesis. The sequence is that of GTPase Der from Flavobacterium psychrophilum (strain ATCC 49511 / DSM 21280 / CIP 103535 / JIP02/86).